The sequence spans 465 residues: VGFKAGVKDYKLTYYTPEYETKHTDILAAFRVTPQPGVPPEEAGAAVAAESSTGTWTTVWTDGLTNLDRYKGRCYHIEPVAGEESQFIAYVAYPLDLFEEGSVTNMLTSIVGNVFGFKALRSLRLEDLRIPVAYAKTFQGPPHGIQVEGDKLNKYGRPLLGCTIKPKLGLSAKNYGRAVYECLRGGLDFTKDDENVNSQPFMRWRDRFVFCAEAIYKAQAETGEIKGHYLNATAGTCEEMMKRAVFARELGVPIIMHDYLTGGFTANTSLAHYCRDNGLLLHIHRAMHAVIDRQKNHGMHFRVLAKALRMSGGDHIHAGTVVGKLEGERDITLGFVDLLRDDYIEKDRSPGIYFSQDWVSLAGVLPVASGGIHVWHMPALTEIFGDDSVLQFGGGTLGHPWGNAPGAVANRVALEACVQARNEGRDLAREGNEIIREASKWSPELAAACEVWKEIKFEFPAMDTL.

At K4 the chain carries N6,N6,N6-trimethyllysine. Substrate-binding residues include N113 and T163. Catalysis depends on K165, which acts as the Proton acceptor. K167 is a binding site for substrate. The Mg(2+) site is built by K191, D193, and E194. K191 carries the N6-carboxylysine modification. H284 functions as the Proton acceptor in the catalytic mechanism. Substrate is bound by residues R285, H317, and S369.

This sequence belongs to the RuBisCO large chain family. Type I subfamily. Heterohexadecamer of 8 large chains and 8 small chains; disulfide-linked. The disulfide link is formed within the large subunit homodimers. Mg(2+) serves as cofactor. The disulfide bond which can form in the large chain dimeric partners within the hexadecamer appears to be associated with oxidative stress and protein turnover.

The protein localises to the plastid. The protein resides in the chloroplast. The enzyme catalyses 2 (2R)-3-phosphoglycerate + 2 H(+) = D-ribulose 1,5-bisphosphate + CO2 + H2O. It catalyses the reaction D-ribulose 1,5-bisphosphate + O2 = 2-phosphoglycolate + (2R)-3-phosphoglycerate + 2 H(+). Its function is as follows. RuBisCO catalyzes two reactions: the carboxylation of D-ribulose 1,5-bisphosphate, the primary event in carbon dioxide fixation, as well as the oxidative fragmentation of the pentose substrate in the photorespiration process. Both reactions occur simultaneously and in competition at the same active site. The sequence is that of Ribulose bisphosphate carboxylase large chain from Cyrilla racemiflora (Swamp titi).